Reading from the N-terminus, the 876-residue chain is Leucine--tRNA ligase (876 aa).

Residues 42–52 (PYPSGKLHMGH) carry the 'HIGH' region motif. The 'KMSKS' region signature appears at 634–638 (KMSKS). Residue Lys-637 participates in ATP binding.

This sequence belongs to the class-I aminoacyl-tRNA synthetase family.

Its subcellular location is the cytoplasm. It carries out the reaction tRNA(Leu) + L-leucine + ATP = L-leucyl-tRNA(Leu) + AMP + diphosphate. This chain is Leucine--tRNA ligase, found in Neisseria meningitidis serogroup B (strain ATCC BAA-335 / MC58).